A 102-amino-acid polypeptide reads, in one-letter code: MASPTIAANAYANLARVLENSGAGKGSEASGQSFASLLKDAVGSVMESGRKSDAQTVAMAAGKANVMDVVTAVADTDVAVSTLVSVRDRVISAYEDIMKMPI.

The protein belongs to the FliE family.

It is found in the bacterial flagellum basal body. In Bradyrhizobium diazoefficiens (strain JCM 10833 / BCRC 13528 / IAM 13628 / NBRC 14792 / USDA 110), this protein is Flagellar hook-basal body complex protein FliE 1 (fliE1).